The following is a 339-amino-acid chain: Glyceraldehyde-3-phosphate dehydrogenase (339 aa).

NAD(+) contacts are provided by residues 12 to 13 (RI), D34, and K79. D-glyceraldehyde 3-phosphate-binding positions include 150 to 152 (SCT), T181, 210 to 211 (TG), and R233. Residue C151 is the Nucleophile of the active site. N316 is a binding site for NAD(+).

This sequence belongs to the glyceraldehyde-3-phosphate dehydrogenase family. As to quaternary structure, homotetramer.

The protein localises to the cytoplasm. The catalysed reaction is D-glyceraldehyde 3-phosphate + phosphate + NAD(+) = (2R)-3-phospho-glyceroyl phosphate + NADH + H(+). It functions in the pathway carbohydrate degradation; glycolysis; pyruvate from D-glyceraldehyde 3-phosphate: step 1/5. This Cryptococcus neoformans var. neoformans serotype D (strain B-3501A) (Filobasidiella neoformans) protein is Glyceraldehyde-3-phosphate dehydrogenase (GPD).